The chain runs to 150 residues: Protein Turandot X1/X2 (150 aa).

A signal peptide spans 1–22; it reads MRLYIGSLLICVLLGIVPFATA. Positions 127–150 are disordered; that stretch reads REEGQSNHANSPTTSPSRIQKMTK. Residues 132-150 show a composition bias toward polar residues; that stretch reads SNHANSPTTSPSRIQKMTK.

Belongs to the Turandot family.

The protein resides in the secreted. Its function is as follows. A humoral factor that may play a role in stress tolerance. This chain is Protein Turandot X1/X2, found in Drosophila sechellia (Fruit fly).